Reading from the N-terminus, the 430-residue chain is 3-phosphoshikimate 1-carboxyvinyltransferase (430 aa).

The 3-phosphoshikimate site is built by Lys23, Ser24, and Arg28. Lys23 is a binding site for phosphoenolpyruvate. Phosphoenolpyruvate-binding residues include Gly93 and Arg121. Residues Ser166, Gln168, Asp313, and Lys340 each coordinate 3-phosphoshikimate. Gln168 serves as a coordination point for phosphoenolpyruvate. Asp313 serves as the catalytic Proton acceptor. Residues Arg344 and Arg386 each coordinate phosphoenolpyruvate.

This sequence belongs to the EPSP synthase family. Monomer.

The protein localises to the cytoplasm. It catalyses the reaction 3-phosphoshikimate + phosphoenolpyruvate = 5-O-(1-carboxyvinyl)-3-phosphoshikimate + phosphate. The protein operates within metabolic intermediate biosynthesis; chorismate biosynthesis; chorismate from D-erythrose 4-phosphate and phosphoenolpyruvate: step 6/7. In terms of biological role, catalyzes the transfer of the enolpyruvyl moiety of phosphoenolpyruvate (PEP) to the 5-hydroxyl of shikimate-3-phosphate (S3P) to produce enolpyruvyl shikimate-3-phosphate and inorganic phosphate. This is 3-phosphoshikimate 1-carboxyvinyltransferase from Anaeromyxobacter sp. (strain Fw109-5).